The sequence spans 189 residues: Ribosome maturation factor RimM (189 aa).

The PRC barrel domain occupies 95–177 (EDDEFYYADL…AGLVDDPEEL (83 aa)).

The protein belongs to the RimM family. As to quaternary structure, binds ribosomal protein uS19.

The protein resides in the cytoplasm. An accessory protein needed during the final step in the assembly of 30S ribosomal subunit, possibly for assembly of the head region. Essential for efficient processing of 16S rRNA. May be needed both before and after RbfA during the maturation of 16S rRNA. It has affinity for free ribosomal 30S subunits but not for 70S ribosomes. In Rhizobium leguminosarum bv. trifolii (strain WSM2304), this protein is Ribosome maturation factor RimM.